Here is a 110-residue protein sequence, read N- to C-terminus: Nucleoid-associated protein KPK_4227 (110 aa).

Residues 1–22 (MFGGKGGLGNLMKQAQQMQDKM) form a disordered region.

It belongs to the YbaB/EbfC family. Homodimer.

It is found in the cytoplasm. It localises to the nucleoid. Binds to DNA and alters its conformation. May be involved in regulation of gene expression, nucleoid organization and DNA protection. This Klebsiella pneumoniae (strain 342) protein is Nucleoid-associated protein KPK_4227.